We begin with the raw amino-acid sequence, 138 residues long: MELFVGTDIVEVERIKKAFDANSKFLERLFTQKEIEYFNSKRMKLPHIAGFFSAKESISKVLGTGISGFSWKDIEICHDEKGAPAVILKGKAKNIADKKGIRDIKLSISHTKTYAISCAIAIGGEKNDSADLKTDERS.

The Mg(2+) site is built by Asp8 and Glu56.

This sequence belongs to the P-Pant transferase superfamily. AcpS family. Requires Mg(2+) as cofactor.

It is found in the cytoplasm. The enzyme catalyses apo-[ACP] + CoA = holo-[ACP] + adenosine 3',5'-bisphosphate + H(+). Its function is as follows. Transfers the 4'-phosphopantetheine moiety from coenzyme A to a Ser of acyl-carrier-protein. In Thermoanaerobacter pseudethanolicus (strain ATCC 33223 / 39E) (Clostridium thermohydrosulfuricum), this protein is Holo-[acyl-carrier-protein] synthase.